We begin with the raw amino-acid sequence, 322 residues long: Olfactory receptor 5P2 (322 aa).

Residues 1 to 28 lie on the Extracellular side of the membrane; it reads MNSLKDGNHTALTGFILLGLTDDPILRV. The N-linked (GlcNAc...) asparagine glycan is linked to asparagine 8. Residues 29–42 traverse the membrane as a helical segment; sequence ILFMIILSGNLSII. Residues 43-50 lie on the Cytoplasmic side of the membrane; sequence ILIRISSQ. The helical transmembrane segment at 51 to 71 threads the bilayer; the sequence is LHHPMYFFLSHLAFADMAYSS. At 72-95 the chain is on the extracellular side; sequence SVTPNMLVNFLVERNTVSYLGCAI. Cysteine 93 and cysteine 185 form a disulfide bridge. A helical membrane pass occupies residues 96–116; sequence QLGSAAFFATVECVLLAAMAY. Over 117-135 the chain is Cytoplasmic; the sequence is DRFVAICSPLLYSTKMSTQ. A helical membrane pass occupies residues 136–156; that stretch reads VSVQLLLVVYIAGFLIAVSYT. The Extracellular segment spans residues 157–192; that stretch reads TSFYFLLFCGPNQVNHFFCDFAPLLELSCSDISVST. A helical transmembrane segment spans residues 193–213; the sequence is VVLSFSSGSIIVVTVCVIAVC. Over 214–233 the chain is Cytoplasmic; it reads YIYILITILKMRSTEGHHKA. A helical transmembrane segment spans residues 234 to 254; the sequence is FSTCTSHLTVVTLFYGTITFI. Over 255–267 the chain is Extracellular; it reads YVMPNFSYSTDQN. Asparagine 259 carries an N-linked (GlcNAc...) asparagine glycan. A helical membrane pass occupies residues 268-288; it reads KVVSVLYTVVIPMLNPLIYSL. The Cytoplasmic portion of the chain corresponds to 289–322; it reads RNKEIKGALKRELVRKILSHDACYFSRTSNNDIT.

This sequence belongs to the G-protein coupled receptor 1 family. Expressed in the tongue.

It localises to the cell membrane. Its function is as follows. Odorant receptor (Potential). May be involved in taste perception. The protein is Olfactory receptor 5P2 (OR5P2) of Homo sapiens (Human).